The following is a 287-amino-acid chain: Rhodopsin (287 aa).

Over 1–5 the chain is Extracellular; that stretch reads VNGAA. The chain crosses the membrane as a helical span at residues 6–30; it reads YAGLCAYMFLLILVGFPVNFLTLYV. Over 31–42 the chain is Cytoplasmic; the sequence is TLEHKKLRTPLN. Residues 43 to 65 traverse the membrane as a helical segment; that stretch reads YILLNLAVADLFMVLGGFTTTMY. At 66 to 79 the chain is on the extracellular side; that stretch reads TSAHGYFVLGRLGC. Cysteine 79 and cysteine 156 form a disulfide bridge. Residues 80–102 form a helical membrane-spanning segment; it reads NVEGFFATLGGEIALWSLVVLAV. A 'Ionic lock' involved in activated form stabilization motif is present at residues 103–105; that stretch reads ERW. At 103 to 121 the chain is on the cytoplasmic side; it reads ERWIVVCKPISNFRFTEEH. The helical transmembrane segment at 122 to 142 threads the bilayer; it reads AIMGLGFNWVMASACAVPPLV. Topologically, residues 143–171 are extracellular; it reads GWSRYIPEGMQCSCGINYYTRSEGFNNES. Asparagine 169 carries N-linked (GlcNAc...) asparagine glycosylation. A helical membrane pass occupies residues 172–193; the sequence is LVMKMLICHFLIPLFVIFFCYG. The Cytoplasmic segment spans residues 194 to 221; it reads RMLCAVKEAAAAQQESETTQRAEREVSR. The chain crosses the membrane as a helical span at residues 222–243; the sequence is MVVIMVISFLVCWLPYASVAWY. The Extracellular segment spans residues 244 to 255; the sequence is IFCNQGSEFGPV. A helical membrane pass occupies residues 256–277; it reads FMTLPAFFAKSASIYNPLIYIC. Position 265 is an N6-(retinylidene)lysine (lysine 265). Topologically, residues 278-287 are cytoplasmic; that stretch reads MNKHSRHCMI.

This sequence belongs to the G-protein coupled receptor 1 family. Opsin subfamily. Post-translationally, phosphorylated on some or all of the serine and threonine residues present in the C-terminal region. In terms of processing, contains one covalently linked retinal chromophore.

It is found in the membrane. Its subcellular location is the cell projection. It localises to the cilium. The protein localises to the photoreceptor outer segment. Photoreceptor required for image-forming vision at low light intensity. While most salt water fish species use retinal as chromophore, most freshwater fish use 3-dehydroretinal, or a mixture of retinal and 3-dehydroretinal. Light-induced isomerization of 11-cis to all-trans retinal triggers a conformational change that activates signaling via G-proteins. Subsequent receptor phosphorylation mediates displacement of the bound G-protein alpha subunit by arrestin and terminates signaling. The chain is Rhodopsin (rho) from Taurulus bubalis (Long-spined sea scorpion).